Here is a 143-residue protein sequence, read N- to C-terminus: Nucleoside diphosphate kinase (143 aa).

Residues lysine 11, phenylalanine 59, arginine 87, threonine 93, arginine 104, and asparagine 114 each coordinate ATP. Residue histidine 117 is the Pros-phosphohistidine intermediate of the active site.

This sequence belongs to the NDK family. As to quaternary structure, homotetramer. Mg(2+) is required as a cofactor.

The protein resides in the cytoplasm. It catalyses the reaction a 2'-deoxyribonucleoside 5'-diphosphate + ATP = a 2'-deoxyribonucleoside 5'-triphosphate + ADP. The enzyme catalyses a ribonucleoside 5'-diphosphate + ATP = a ribonucleoside 5'-triphosphate + ADP. In terms of biological role, major role in the synthesis of nucleoside triphosphates other than ATP. The ATP gamma phosphate is transferred to the NDP beta phosphate via a ping-pong mechanism, using a phosphorylated active-site intermediate. This is Nucleoside diphosphate kinase from Shewanella sp. (strain ANA-3).